The following is a 122-amino-acid chain: Large ribosomal subunit protein uL18 (122 aa).

It belongs to the universal ribosomal protein uL18 family. As to quaternary structure, part of the 50S ribosomal subunit; part of the 5S rRNA/L5/L18/L25 subcomplex. Contacts the 5S and 23S rRNAs.

This is one of the proteins that bind and probably mediate the attachment of the 5S RNA into the large ribosomal subunit, where it forms part of the central protuberance. The sequence is that of Large ribosomal subunit protein uL18 from Prochlorococcus marinus (strain MIT 9301).